A 293-amino-acid chain; its full sequence is Meteorin (293 aa).

Residues 1–23 (MGFPAAALLCALCCGLLAPAARA) form the signal peptide. 5 disulfides stabilise this stretch: Cys-30-Cys-51, Cys-82-Cys-118, Cys-171-Cys-242, Cys-174-Cys-266, and Cys-184-Cys-288.

Belongs to the meteorin family. In terms of assembly, monomer.

The protein localises to the secreted. Its function is as follows. Involved in both glial cell differentiation and axonal network formation during neurogenesis. Promotes astrocyte differentiation and transforms cerebellar astrocytes into radial glia. Also induces axonal extension in small and intermediate neurons of sensory ganglia by activating nearby satellite glia. This is Meteorin (METRN) from Homo sapiens (Human).